A 239-amino-acid polypeptide reads, in one-letter code: Probable GTP-binding protein EngB (239 aa).

In terms of domain architecture, EngB-type G spans 23–219 (QVPEIAFAGR…NDKILELLGL (197 aa)). GTP is bound by residues 31–38 (GRSNAGKS), 58–62 (GRTQH), 92–95 (DLPG), 159–162 (TKSD), and 193–200 (FTAQLFSA). Mg(2+)-binding residues include serine 38 and threonine 60.

This sequence belongs to the TRAFAC class TrmE-Era-EngA-EngB-Septin-like GTPase superfamily. EngB GTPase family. Mg(2+) is required as a cofactor.

Necessary for normal cell division and for the maintenance of normal septation. In Herminiimonas arsenicoxydans, this protein is Probable GTP-binding protein EngB.